Reading from the N-terminus, the 380-residue chain is MEKNKMVSQGNQEPTATPDTMVQPFAAIPFPPPPQNGLSTDYGSQHTQEYATQSTEHGIPLYGGGQSHAEHSTPATSTANASSTTDGSQTEGQQSQTQNSENSESKPTPKRLHVSNIPFRFRDPDLRQMFGQFGKILDVEIIFNERGSKGFGFVTFETSADADRAREKLHSTVVEGRKIEVNNATARVMTNKKSVTPYGNGWKLSPVVGAVYGPELYAAAPGLQADVSLATEAGVPLPGPRGVNTYIPLIIPGFPYPTAAAAATTAAAFRGAHLRGRGRTVYGAVRAVPPTAIPTYPGVLYQDGFYGTELYGGYAAYRYTQPATAATAATAAAAAAAAYSDGYGRVYTADPYHALAPATSYGVGAVASLYRGGYSRFAPY.

Polar residues-rich tracts occupy residues 1 to 20 (MEKNKMVSQGNQEPTATPDT) and 36 to 56 (NGLSTDYGSQHTQEYATQSTE). The disordered stretch occupies residues 1 to 117 (MEKNKMVSQG…TPKRLHVSNI (117 aa)). A compositionally biased stretch (low complexity) spans 72 to 102 (STPATSTANASSTTDGSQTEGQQSQTQNSEN). Residues 110–186 (KRLHVSNIPF…RKIEVNNATA (77 aa)) enclose the RRM domain.

It localises to the nucleus. The protein resides in the cytoplasm. In terms of biological role, RNA-binding protein that regulates alternative splicing events by binding to 5'-UGCAUGU-3' elements. Regulates alternative splicing of tissue-specific exons. This chain is RNA binding protein fox-1 homolog 2 (rbfox2), found in Xenopus tropicalis (Western clawed frog).